The chain runs to 341 residues: Small ribosomal subunit biogenesis GTPase RsgA (341 aa).

A CP-type G domain is found at 112 to 268 (RQQLIAANLD…LIDTPGMREL (157 aa)). Residues 157-160 (TKVD) and 210-218 (GSSGAGKST) each bind GTP. Zn(2+) is bound by residues Cys290, Cys295, His297, and Cys303.

Belongs to the TRAFAC class YlqF/YawG GTPase family. RsgA subfamily. As to quaternary structure, monomer. Associates with 30S ribosomal subunit, binds 16S rRNA. The cofactor is Zn(2+).

The protein resides in the cytoplasm. Functionally, one of several proteins that assist in the late maturation steps of the functional core of the 30S ribosomal subunit. Helps release RbfA from mature subunits. May play a role in the assembly of ribosomal proteins into the subunit. Circularly permuted GTPase that catalyzes slow GTP hydrolysis, GTPase activity is stimulated by the 30S ribosomal subunit. The polypeptide is Small ribosomal subunit biogenesis GTPase RsgA (Xylella fastidiosa (strain 9a5c)).